The sequence spans 426 residues: RuvB-like protein 1 (426 aa).

Glycine 62–threonine 69 is a binding site for ATP.

It belongs to the RuvB family. In terms of assembly, component of the SWR1 chromatin remodeling complex, the INO80 chromatin remodeling complex, and of the R2TP complex.

It is found in the nucleus. The enzyme catalyses ATP + H2O = ADP + phosphate + H(+). DNA helicase which participates in several chromatin remodeling complexes, including the SWR1 and the INO80 complexes. The SWR1 complex mediates the ATP-dependent exchange of histone H2A for the H2A variant HZT1 leading to transcriptional regulation of selected genes by chromatin remodeling. The INO80 complex remodels chromatin by shifting nucleosomes and is involved in DNA repair. Also involved in pre-rRNA processing. This is RuvB-like protein 1 (RVB1) from Encephalitozoon cuniculi (strain GB-M1) (Microsporidian parasite).